The primary structure comprises 159 residues: 3-dehydroquinate dehydratase (159 aa).

Y31 acts as the Proton acceptor in catalysis. Residues N82, H88, and D95 each coordinate substrate. H109 serves as the catalytic Proton donor. Substrate contacts are provided by residues 110 to 111 (IS) and R120.

It belongs to the type-II 3-dehydroquinase family. In terms of assembly, homododecamer.

The enzyme catalyses 3-dehydroquinate = 3-dehydroshikimate + H2O. Its pathway is metabolic intermediate biosynthesis; chorismate biosynthesis; chorismate from D-erythrose 4-phosphate and phosphoenolpyruvate: step 3/7. In terms of biological role, catalyzes a trans-dehydration via an enolate intermediate. This chain is 3-dehydroquinate dehydratase, found in Streptomyces avermitilis (strain ATCC 31267 / DSM 46492 / JCM 5070 / NBRC 14893 / NCIMB 12804 / NRRL 8165 / MA-4680).